A 399-amino-acid polypeptide reads, in one-letter code: Acetate kinase (399 aa).

Asparagine 7 is a binding site for Mg(2+). Position 14 (lysine 14) interacts with ATP. Arginine 90 is a binding site for substrate. Aspartate 147 functions as the Proton donor/acceptor in the catalytic mechanism. ATP contacts are provided by residues 207 to 211, 282 to 284, and 330 to 334; these read HLGNG, DFR, and GIGEN. Mg(2+) is bound at residue glutamate 385.

This sequence belongs to the acetokinase family. In terms of assembly, homodimer. Mg(2+) serves as cofactor. The cofactor is Mn(2+).

Its subcellular location is the cytoplasm. The catalysed reaction is acetate + ATP = acetyl phosphate + ADP. Its pathway is metabolic intermediate biosynthesis; acetyl-CoA biosynthesis; acetyl-CoA from acetate: step 1/2. In terms of biological role, catalyzes the formation of acetyl phosphate from acetate and ATP. Can also catalyze the reverse reaction. The chain is Acetate kinase from Caldicellulosiruptor saccharolyticus (strain ATCC 43494 / DSM 8903 / Tp8T 6331).